Consider the following 431-residue polypeptide: Histidinol dehydrogenase (431 aa).

NAD(+)-binding residues include Tyr127, Gln185, and Asn208. Substrate contacts are provided by Ser234, Gln256, and His259. Zn(2+)-binding residues include Gln256 and His259. Catalysis depends on proton acceptor residues Glu323 and His324. 4 residues coordinate substrate: His324, Asp357, Glu411, and His416. Residue Asp357 coordinates Zn(2+). His416 is a binding site for Zn(2+).

This sequence belongs to the histidinol dehydrogenase family. The cofactor is Zn(2+).

It carries out the reaction L-histidinol + 2 NAD(+) + H2O = L-histidine + 2 NADH + 3 H(+). Its pathway is amino-acid biosynthesis; L-histidine biosynthesis; L-histidine from 5-phospho-alpha-D-ribose 1-diphosphate: step 9/9. Its function is as follows. Catalyzes the sequential NAD-dependent oxidations of L-histidinol to L-histidinaldehyde and then to L-histidine. This is Histidinol dehydrogenase from Vibrio vulnificus (strain CMCP6).